Here is a 465-residue protein sequence, read N- to C-terminus: Ribulose bisphosphate carboxylase large chain (465 aa).

Position 4 is an N6,N6,N6-trimethyllysine (Lys4). The substrate site is built by Asn113 and Thr163. Residue Lys165 is the Proton acceptor of the active site. Lys167 serves as a coordination point for substrate. Mg(2+) is bound by residues Lys191, Asp193, and Glu194. At Lys191 the chain carries N6-carboxylysine. The active-site Proton acceptor is the His284. Substrate is bound by residues Arg285, His317, and Ser369.

The protein belongs to the RuBisCO large chain family. Type I subfamily. Heterohexadecamer of 8 large chains and 8 small chains; disulfide-linked. The disulfide link is formed within the large subunit homodimers. Requires Mg(2+) as cofactor. In terms of processing, the disulfide bond which can form in the large chain dimeric partners within the hexadecamer appears to be associated with oxidative stress and protein turnover.

Its subcellular location is the plastid. It localises to the chloroplast. It carries out the reaction 2 (2R)-3-phosphoglycerate + 2 H(+) = D-ribulose 1,5-bisphosphate + CO2 + H2O. The catalysed reaction is D-ribulose 1,5-bisphosphate + O2 = 2-phosphoglycolate + (2R)-3-phosphoglycerate + 2 H(+). Its function is as follows. RuBisCO catalyzes two reactions: the carboxylation of D-ribulose 1,5-bisphosphate, the primary event in carbon dioxide fixation, as well as the oxidative fragmentation of the pentose substrate in the photorespiration process. Both reactions occur simultaneously and in competition at the same active site. This is Ribulose bisphosphate carboxylase large chain from Ilex crenata (Japanese holly).